The sequence spans 36 residues: Gloverin (36 aa).

It localises to the secreted. Antibacterial protein. The sequence is that of Gloverin from Heliothis virescens (Tobacco budworm moth).